Reading from the N-terminus, the 527-residue chain is Transcription factor bHLH157 (527 aa).

Disordered regions lie at residues S295–Q318 and S335–Q368. A compositionally biased stretch (polar residues) spans T307–Q318. The short motif at W341–G348 is the Nuclear localization signal element. Residues K343–Q368 show a composition bias toward basic and acidic residues. Positions A354–M403 constitute a bHLH domain.

It belongs to the bHLH protein family. LHW subfamily. As to quaternary structure, homodimer.

The protein resides in the nucleus. In terms of biological role, transcription factor that may regulate root development. The chain is Transcription factor bHLH157 (BHLH157) from Arabidopsis thaliana (Mouse-ear cress).